The chain runs to 122 residues: Small ribosomal subunit protein uS13 (122 aa).

Residues 95–122 (GLPVRGQKTKTNARTRKGPKRTVANKKK) form a disordered region.

Belongs to the universal ribosomal protein uS13 family. As to quaternary structure, part of the 30S ribosomal subunit. Forms a loose heterodimer with protein S19. Forms two bridges to the 50S subunit in the 70S ribosome.

In terms of biological role, located at the top of the head of the 30S subunit, it contacts several helices of the 16S rRNA. In the 70S ribosome it contacts the 23S rRNA (bridge B1a) and protein L5 of the 50S subunit (bridge B1b), connecting the 2 subunits; these bridges are implicated in subunit movement. Contacts the tRNAs in the A and P-sites. In Agathobacter rectalis (strain ATCC 33656 / DSM 3377 / JCM 17463 / KCTC 5835 / VPI 0990) (Eubacterium rectale), this protein is Small ribosomal subunit protein uS13.